A 316-amino-acid chain; its full sequence is Apolipoprotein E (316 aa).

The signal sequence occupies residues 1-18 (MKALWAVLVVTLLAGCLA). 8 tandem repeats follow at residues 76–97 (VLME…EQMG), 98–119 (PMAE…SRLG), 120–141 (ADME…TMLG), 142–163 (QSTE…KRLM), 164–185 (RDAE…EGAE), 186–207 (RGVG…QRTA), 208–229 (NLGA…ARIR), and 230–251 (GRLE…EQME). The tract at residues 76–251 (VLMEDTMTEL…RLEEVREQME (176 aa)) is 8 X 22 AA approximate tandem repeats. Methionine 139 is modified (methionine sulfoxide). Serine 143 bears the Phosphoserine mark. The tract at residues 154 to 164 (HLRKLRKRLMR) is LDL and other lipoprotein receptors binding. Heparin is bound at residue 158 to 161 (LRKR). Positions 206 to 286 (TANLGAGAAQ…GWFEPLVEDM (81 aa)) are lipid-binding and lipoprotein association. 225–232 (GARIRGRL) serves as a coordination point for heparin. Residues 262 to 316 (QQMRLQAEIFQTRLKGWFEPLVEDMQRQWANLMEKIQASVATNPIPPSSVPQESQ) are homooligomerization. A specificity for association with VLDL region spans residues 274–286 (RLKGWFEPLVEDM).

The protein belongs to the apolipoprotein A1/A4/E family. Homotetramer. May interact with ABCA1; functionally associated with ABCA1 in the biogenesis of HDLs. May interact with APP/A4 amyloid-beta peptide; the interaction is extremely stable in vitro but its physiological significance is unclear. May interact with MAPT. May interact with MAP2. In the cerebrospinal fluid, interacts with secreted SORL1. Interacts with PMEL; this allows the loading of PMEL luminal fragment on ILVs to induce fibril nucleation. Post-translationally, APOE exists as multiple glycosylated and sialylated glycoforms within cells and in plasma. The extent of glycosylation and sialylation are tissue and context specific. In terms of processing, glycated in plasma VLDL. Phosphorylated by FAM20C in the extracellular medium.

The protein resides in the secreted. Its subcellular location is the extracellular space. It localises to the extracellular matrix. It is found in the extracellular vesicle. The protein localises to the endosome. The protein resides in the multivesicular body. Functionally, APOE is an apolipoprotein, a protein associating with lipid particles, that mainly functions in lipoprotein-mediated lipid transport between organs via the plasma and interstitial fluids. APOE is a core component of plasma lipoproteins and is involved in their production, conversion and clearance. Apolipoproteins are amphipathic molecules that interact both with lipids of the lipoprotein particle core and the aqueous environment of the plasma. As such, APOE associates with chylomicrons, chylomicron remnants, very low density lipoproteins (VLDL) and intermediate density lipoproteins (IDL) but shows a preferential binding to high-density lipoproteins (HDL). It also binds a wide range of cellular receptors including the LDL receptor/LDLR, the LDL receptor-related proteins LRP1, LRP2 and LRP8 and the very low-density lipoprotein receptor/VLDLR that mediate the cellular uptake of the APOE-containing lipoprotein particles. Finally, APOE also has a heparin-binding activity and binds heparan-sulfate proteoglycans on the surface of cells, a property that supports the capture and the receptor-mediated uptake of APOE-containing lipoproteins by cells. A main function of APOE is to mediate lipoprotein clearance through the uptake of chylomicrons, VLDLs, and HDLs by hepatocytes. APOE is also involved in the biosynthesis by the liver of VLDLs as well as their uptake by peripheral tissues ensuring the delivery of triglycerides and energy storage in muscle, heart and adipose tissues. By participating in the lipoprotein-mediated distribution of lipids among tissues, APOE plays a critical role in plasma and tissues lipid homeostasis. APOE is also involved in two steps of reverse cholesterol transport, the HDLs-mediated transport of cholesterol from peripheral tissues to the liver, and thereby plays an important role in cholesterol homeostasis. First, it is functionally associated with ABCA1 in the biogenesis of HDLs in tissues. Second, it is enriched in circulating HDLs and mediates their uptake by hepatocytes. APOE also plays an important role in lipid transport in the central nervous system, regulating neuron survival and sprouting. The sequence is that of Apolipoprotein E (APOE) from Microtus ochrogaster (Prairie vole).